A 108-amino-acid chain; its full sequence is uncharacterized protein (108 aa).

This is an uncharacterized protein from Microplitis demolitor bracovirus (isolate Webb) (MdBV).